A 257-amino-acid polypeptide reads, in one-letter code: GTP cyclohydrolase FolE2 (257 aa).

Belongs to the GTP cyclohydrolase IV family.

It carries out the reaction GTP + H2O = 7,8-dihydroneopterin 3'-triphosphate + formate + H(+). The protein operates within cofactor biosynthesis; 7,8-dihydroneopterin triphosphate biosynthesis; 7,8-dihydroneopterin triphosphate from GTP: step 1/1. In terms of biological role, converts GTP to 7,8-dihydroneopterin triphosphate. This Pelobacter propionicus (strain DSM 2379 / NBRC 103807 / OttBd1) protein is GTP cyclohydrolase FolE2.